The sequence spans 332 residues: Small ribosomal subunit protein uS2 (332 aa).

It belongs to the universal ribosomal protein uS2 family.

This chain is Small ribosomal subunit protein uS2, found in Nitrobacter hamburgensis (strain DSM 10229 / NCIMB 13809 / X14).